Here is a 157-residue protein sequence, read N- to C-terminus: Transcription elongation factor GreA (157 aa).

Positions E25–L43 are enriched in basic and acidic residues. Residues E25–A47 are disordered. Positions L43–D79 form a coiled coil.

Belongs to the GreA/GreB family.

Functionally, necessary for efficient RNA polymerase transcription elongation past template-encoded arresting sites. The arresting sites in DNA have the property of trapping a certain fraction of elongating RNA polymerases that pass through, resulting in locked ternary complexes. Cleavage of the nascent transcript by cleavage factors such as GreA or GreB allows the resumption of elongation from the new 3'terminus. GreA releases sequences of 2 to 3 nucleotides. In Amoebophilus asiaticus (strain 5a2), this protein is Transcription elongation factor GreA.